The primary structure comprises 413 residues: Arginine biosynthesis bifunctional protein ArgJ (413 aa).

The substrate site is built by T158, K184, T195, E285, N408, and S413. The active-site Nucleophile is the T195.

This sequence belongs to the ArgJ family. As to quaternary structure, heterotetramer of two alpha and two beta chains.

Its subcellular location is the cytoplasm. The enzyme catalyses N(2)-acetyl-L-ornithine + L-glutamate = N-acetyl-L-glutamate + L-ornithine. It catalyses the reaction L-glutamate + acetyl-CoA = N-acetyl-L-glutamate + CoA + H(+). It functions in the pathway amino-acid biosynthesis; L-arginine biosynthesis; L-ornithine and N-acetyl-L-glutamate from L-glutamate and N(2)-acetyl-L-ornithine (cyclic): step 1/1. The protein operates within amino-acid biosynthesis; L-arginine biosynthesis; N(2)-acetyl-L-ornithine from L-glutamate: step 1/4. Functionally, catalyzes two activities which are involved in the cyclic version of arginine biosynthesis: the synthesis of N-acetylglutamate from glutamate and acetyl-CoA as the acetyl donor, and of ornithine by transacetylation between N(2)-acetylornithine and glutamate. This Rhizobium meliloti (strain 1021) (Ensifer meliloti) protein is Arginine biosynthesis bifunctional protein ArgJ.